Here is a 76-residue protein sequence, read N- to C-terminus: Large ribosomal subunit protein uL24 (76 aa).

The protein belongs to the universal ribosomal protein uL24 family. As to quaternary structure, part of the 50S ribosomal subunit.

In terms of biological role, one of two assembly initiator proteins, it binds directly to the 5'-end of the 23S rRNA, where it nucleates assembly of the 50S subunit. Its function is as follows. One of the proteins that surrounds the polypeptide exit tunnel on the outside of the subunit. The polypeptide is Large ribosomal subunit protein uL24 (Sulfurimonas denitrificans (strain ATCC 33889 / DSM 1251) (Thiomicrospira denitrificans (strain ATCC 33889 / DSM 1251))).